Consider the following 247-residue polypeptide: Adenosylcobinamide-GDP ribazoletransferase (247 aa).

The next 6 helical transmembrane spans lie at 31-51 (VVWFPAAGLVVGAAVALAAAL), 57-77 (PWLGALAGVVMWAWITGGLHL), 109-129 (FGVIVLVLQLAAKLVLLHWLL), 136-156 (PALVLIPAWTRWAAAGWTLLL), 189-209 (ITPIAFVALIPAVLWGVWMWL), and 218-238 (ILGAGIEWSESAALLLAGVSL).

It belongs to the CobS family. The cofactor is Mg(2+).

It localises to the cell inner membrane. It catalyses the reaction alpha-ribazole + adenosylcob(III)inamide-GDP = adenosylcob(III)alamin + GMP + H(+). The enzyme catalyses alpha-ribazole 5'-phosphate + adenosylcob(III)inamide-GDP = adenosylcob(III)alamin 5'-phosphate + GMP + H(+). It participates in cofactor biosynthesis; adenosylcobalamin biosynthesis; adenosylcobalamin from cob(II)yrinate a,c-diamide: step 7/7. Its function is as follows. Joins adenosylcobinamide-GDP and alpha-ribazole to generate adenosylcobalamin (Ado-cobalamin). Also synthesizes adenosylcobalamin 5'-phosphate from adenosylcobinamide-GDP and alpha-ribazole 5'-phosphate. This is Adenosylcobinamide-GDP ribazoletransferase from Thiobacillus denitrificans (strain ATCC 25259 / T1).